Consider the following 308-residue polypeptide: Serine/threonine-protein phosphatase PP1 (308 aa).

Positions 64, 66, 92, and 124 each coordinate Mn(2+). The active-site Proton donor is the His-125. His-173 and His-248 together coordinate Mn(2+).

It belongs to the PPP phosphatase family. PP-1 subfamily. It depends on Mn(2+) as a cofactor.

It localises to the cytoplasm. The enzyme catalyses O-phospho-L-seryl-[protein] + H2O = L-seryl-[protein] + phosphate. It catalyses the reaction O-phospho-L-threonyl-[protein] + H2O = L-threonyl-[protein] + phosphate. The polypeptide is Serine/threonine-protein phosphatase PP1 (pph-3) (Neurospora crassa (strain ATCC 24698 / 74-OR23-1A / CBS 708.71 / DSM 1257 / FGSC 987)).